The primary structure comprises 167 residues: Ureidoglycolate lyase (167 aa).

This sequence belongs to the ureidoglycolate lyase family. As to quaternary structure, homodimer. Requires Ni(2+) as cofactor.

The enzyme catalyses (S)-ureidoglycolate = urea + glyoxylate. It participates in nitrogen metabolism; (S)-allantoin degradation. Functionally, catalyzes the catabolism of the allantoin degradation intermediate (S)-ureidoglycolate, generating urea and glyoxylate. Involved in the utilization of allantoin as nitrogen source. This chain is Ureidoglycolate lyase, found in Pseudomonas entomophila (strain L48).